The sequence spans 263 residues: MKPTTIALLQKCKQEKKRFATITAYDYSFARLFADEGINVMLVGDSLGMTVQGHDSTLPVTVEDIAYHTRAVRRGAPNCLLLSDLPFMAYATPEQAFENAAVVMRAGANMVKIEGGAWLVDTVKMLTERAVPVCGHLGLTPQSVNIFGGYKIQGRGDAGQVLLDDALALEAAGAQLLVLECVPVELAKRVTEALSIPVIGIGAGNVTDGQILVMHDAFGITGGHIPKFAKNFLAEAGDMRAAVRQYIAEVESSVYPGEEHSFH.

Mg(2+) contacts are provided by Asp45 and Asp84. 3-methyl-2-oxobutanoate contacts are provided by residues 45-46 (DS), Asp84, and Lys112. Mg(2+) is bound at residue Glu114. Residue Glu180 is the Proton acceptor of the active site.

The protein belongs to the PanB family. Homodecamer; pentamer of dimers. It depends on Mg(2+) as a cofactor.

The protein localises to the cytoplasm. The enzyme catalyses 3-methyl-2-oxobutanoate + (6R)-5,10-methylene-5,6,7,8-tetrahydrofolate + H2O = 2-dehydropantoate + (6S)-5,6,7,8-tetrahydrofolate. The protein operates within cofactor biosynthesis; (R)-pantothenate biosynthesis; (R)-pantoate from 3-methyl-2-oxobutanoate: step 1/2. Its function is as follows. Catalyzes the reversible reaction in which hydroxymethyl group from 5,10-methylenetetrahydrofolate is transferred onto alpha-ketoisovalerate to form ketopantoate. The chain is 3-methyl-2-oxobutanoate hydroxymethyltransferase from Citrobacter koseri (strain ATCC BAA-895 / CDC 4225-83 / SGSC4696).